The following is a 369-amino-acid chain: Fructose-bisphosphate aldolase 2 (369 aa).

Asp-40 serves as a coordination point for dihydroxyacetone phosphate. D-glyceraldehyde 3-phosphate contacts are provided by Ser-42 and Thr-45. Residue Arg-49 coordinates beta-D-fructose 1,6-bisphosphate. A D-glyceraldehyde 3-phosphate-binding site is contributed by Lys-113. Lys-152 provides a ligand contact to dihydroxyacetone phosphate. Glu-195 lines the D-glyceraldehyde 3-phosphate pocket. Glu-195 acts as the Proton acceptor in catalysis. Positions 237, 279, and 280 each coordinate dihydroxyacetone phosphate. The Schiff-base intermediate with dihydroxyacetone phosphate role is filled by Lys-237. Residues 279–281 (SGG) and Ser-307 each bind beta-D-fructose 1,6-bisphosphate. Dihydroxyacetone phosphate-binding residues include Gly-309 and Arg-310. Arg-310 is a binding site for beta-D-fructose 1,6-bisphosphate.

This sequence belongs to the class I fructose-bisphosphate aldolase family.

Its subcellular location is the cytoplasm. It localises to the membrane. The protein localises to the host cell membrane. It catalyses the reaction beta-D-fructose 1,6-bisphosphate = D-glyceraldehyde 3-phosphate + dihydroxyacetone phosphate. The protein operates within carbohydrate degradation; glycolysis; D-glyceraldehyde 3-phosphate and glycerone phosphate from D-glucose: step 4/4. Its function is as follows. Plays a key role in glycolysis by catalyzing the cleavage of fructose 1,6-bisphosphate into dihydroxyacetone phosphate and glyceraldehyde 3-phosphate. This Plasmodium berghei (strain Anka) protein is Fructose-bisphosphate aldolase 2 (ALDO2).